Consider the following 476-residue polypeptide: NAD(+) hydrolase ThsA (476 aa).

The Deacetylase sirtuin-type domain occupies N4 to K283. A23, D114, and H152 together coordinate NAD(+). H152 functions as the Proton acceptor in the catalytic mechanism. The tract at residues T284–N476 is SLOG (STALD) domain, binds 3'cADPR. Residues G289, S290, L326, F357, R371, K388, G399, and E403 each contribute to the 3'cADPR site.

This sequence belongs to the soluble Thoeris ThsA family. In terms of assembly, homotetramer formed by dimer of dimers; homooctamers are occasionally seen. Not seen to interact with ThsB. In the absence of the signal generated by ThsB, 63% monomer and 20% homotetramer; in the presence of the ThsB signal product 40% of the protein is dimeric. Homotetramer in solution; probably dimerizes via the N-terminal sirtuin-like domain.

Its subcellular location is the cytoplasm. It carries out the reaction NAD(+) + H2O = ADP-D-ribose + nicotinamide + H(+). Activated by a molecule generated by endogenous ThsB (AC J8G8J6) or ThsB' (AC J8CSK2); activation in vitro is 50-100x more sensitive to 3' cyclic ADP-D-ribose (3'cADPR) than 2'cADPR. 3'cADPR activates the NADase function of ThsA by binding to the SLOG domain, which changes its tetramer organization, allowing NAD to access the active site. Also activated by a signal molecule generated by B.dafuensis TIR1 (AC A0A5B8Z670) and TIR2 (AC A0A5B8Z260), and by BdTIR (AC I1GTC2), a plant protein involved in defense against bacterial infection. The signal produced by BdTIR is probably 2'cADPR, which activates this protein, the signal produced by endogenous ThsB' is probably 3'cADPR. Its function is as follows. NAD(+) hydrolyzing component (NADase) of the Thoeris antiviral defense system, composed of ThsA and ThsB. Activated by a signal molecule generated by endogenous ThsB (AC J8G8J6) or ThsB' (AC J8CSK2, probably 3'cADPR), by TIR1 and TIR2 from B.dafuensis or by BdTIR from B.distachyon (AC I1GTC2, probably 2'cADPR). Upon activation binds and hydrolyzes NAD(+), leading to cell death and inhibition of phage replication. Not seen to bind DNA. Activation is 50-100x more sensitive to 3' cyclic ADP-D-ribose (3'cADPR) than 2'cADPR. In another paper ThsA is not activated by any tested cADPR isomer, although it binds 3'cADPR; it was suggested the protein is already in a fully active state. Expression of ThsA and ThsB in B.subtilis (strain BEST7003) confers resistance to phages phi29, SBSphiC, SBSphiJ and SPO1. At multiplicity of infection (MOI) of 0.05 Thoeris-encoding cultures grow normally when infected with SPO1, at MOI 5 cultures collapse prematurely by 90 minutes post-infection, thus the phage are not able to complete a replication cycle. NAD(+) levels fall and ADP-D-ribose levels rise 60 minutes post-infection. Thoeris cultures eventually recover, but retain the same susceptibility to SPO1. In Bacillus cereus (strain MSX-D12), this protein is NAD(+) hydrolase ThsA.